The sequence spans 64 residues: Large ribosomal subunit protein bL33 (64 aa).

This sequence belongs to the bacterial ribosomal protein bL33 family.

The sequence is that of Large ribosomal subunit protein bL33 from Nostoc sp. (strain PCC 7120 / SAG 25.82 / UTEX 2576).